The following is a 191-amino-acid chain: Small ribosomal subunit protein eS7z (191 aa).

Methionine 1 carries the post-translational modification N-acetylmethionine. A coiled-coil region spans residues 15–50 (ELSELDEQVAQAFFDLENTNQELKSELKDLYVNSAV).

The protein belongs to the eukaryotic ribosomal protein eS7 family.

The sequence is that of Small ribosomal subunit protein eS7z (RPS7A) from Arabidopsis thaliana (Mouse-ear cress).